A 436-amino-acid chain; its full sequence is Methylenetetrahydrofolate--tRNA-(uracil-5-)-methyltransferase TrmFO (436 aa).

Residue 9–14 coordinates FAD; that stretch reads GAGLAG.

The protein belongs to the MnmG family. TrmFO subfamily. FAD is required as a cofactor.

It localises to the cytoplasm. The enzyme catalyses uridine(54) in tRNA + (6R)-5,10-methylene-5,6,7,8-tetrahydrofolate + NADH + H(+) = 5-methyluridine(54) in tRNA + (6S)-5,6,7,8-tetrahydrofolate + NAD(+). The catalysed reaction is uridine(54) in tRNA + (6R)-5,10-methylene-5,6,7,8-tetrahydrofolate + NADPH + H(+) = 5-methyluridine(54) in tRNA + (6S)-5,6,7,8-tetrahydrofolate + NADP(+). Functionally, catalyzes the folate-dependent formation of 5-methyl-uridine at position 54 (M-5-U54) in all tRNAs. The chain is Methylenetetrahydrofolate--tRNA-(uracil-5-)-methyltransferase TrmFO from Acetivibrio thermocellus (strain ATCC 27405 / DSM 1237 / JCM 9322 / NBRC 103400 / NCIMB 10682 / NRRL B-4536 / VPI 7372) (Clostridium thermocellum).